The chain runs to 1099 residues: MPRREDIKRILVIGSGPITIGQAAEFDYSGTQALKALKSAGYEVIIVNSNSATIMTDPEFSDAVYIEPLTVEFLEEIIKKERPDALLPTLGGQTALNLAVELAESGILDRYGVQLIGAKLESIKKAEDRELFKKTMEEAGLEVLRSRLVNNLTDALETAREFGYPVIIRPSFTLGGTGGGVAFNEEELREIVTKGLIESPVHTVLIEESVIGWKEYELEVVRDGAGNFIVVCSIENLDPMGIHTGDSITVAPSQTLTDVEYQRMRDAAYKVIDAIGIETGGSNIQFAVDPKTGRMVVIEMNPRVSRSSALASKATGYPIAKIAALLAVGFTLDEIPNYITGKTLAAFEPSIDYVVVKIPRFQLEKFPGADPRLNTQMKSVGEVMAIGRTFKEALGKALRSLELDAAPKLDLDHIREHLANPTPERISYIFAAFRNGMDVEEVHELTKIDRWFLREMKACIDLEEELKEKKFDVEVLRKAKQWGYSDREIAEIWQVSEKDVRKMREKNRIFPVYKMVDTCAAEFEAQTPYYYSTYNGVENEAIPTDKEKIMILGSGPNRIGQGIEFDYTNVHGVWAFQEEGYEAIMVNSNPETVSTDYDTSDRLYFEPLTVEDVLEIVRNEKPKGVVVAFGGQTPLRIARHLVEEGVNIIGTSFESIEIAEDREKFAKLLKRIGLRCPPFGTASSVEEALKVAEDLGYPVLVRPSYVLGGRAMAIVDTPEELERYVREAAIVSPGYPILIDKFLEDAIELDVDVVSDGKYVWIAGLMEQIEEAGVHSGDSACVLPPVSLSEKLVEEIEKTVHRLVKALKIVGIANIQMAVKDEEIYIIEANPRASRTVPFVSKAIGIPVAKIAAKIMVGRSLPELLSEYFPYPTRPGTKVDKLGDSEILPTPWPRMFSVKEVVIPFHKFPGTDVLLGPEMRSTGEVMGIGEDFAEAFAKAEIAAGNPLPTEGAILATIADKDKRDAIPLLAHLADMGFEIYATKGTAKALQSHGVDVKVVPKVGEGRPDVIDLLEQGKISLVVITQSSDEPSLVAVSHGKDPFKVEGRRTVGYMIRTTALKRKIPYLTTVEALRAAVAAIRKMKRGSIVKVRKLTDTWKM.

The carboxyphosphate synthetic domain stretch occupies residues 1–402 (MPRREDIKRI…ALGKALRSLE (402 aa)). 12 residues coordinate ATP: R129, R169, G175, G176, E208, V210, E215, G241, I242, H243, Q285, and E299. An ATP-grasp 1 domain is found at 133-328 (KKTMEEAGLE…IAKIAALLAV (196 aa)). The Mg(2+) site is built by Q285, E299, and N301. Mn(2+)-binding residues include Q285, E299, and N301. An oligomerization domain region spans residues 403 to 541 (LDAAPKLDLD…STYNGVENEA (139 aa)). Residues 542–944 (IPTDKEKIMI…AFAKAEIAAG (403 aa)) are carbamoyl phosphate synthetic domain. One can recognise an ATP-grasp 2 domain in the interval 666 to 857 (AKLLKRIGLR…VAKIAAKIMV (192 aa)). 10 residues coordinate ATP: R702, K741, L743, E748, G773, V774, H775, S776, Q816, and E828. Residues Q816, E828, and N830 each contribute to the Mg(2+) site. Q816, E828, and N830 together coordinate Mn(2+). The MGS-like domain occupies 945 to 1099 (NPLPTEGAIL…VRKLTDTWKM (155 aa)). An allosteric domain region spans residues 945-1099 (NPLPTEGAIL…VRKLTDTWKM (155 aa)).

This sequence belongs to the CarB family. Composed of two chains; the small (or glutamine) chain promotes the hydrolysis of glutamine to ammonia, which is used by the large (or ammonia) chain to synthesize carbamoyl phosphate. Tetramer of heterodimers (alpha,beta)4. It depends on Mg(2+) as a cofactor. Mn(2+) is required as a cofactor.

The enzyme catalyses hydrogencarbonate + L-glutamine + 2 ATP + H2O = carbamoyl phosphate + L-glutamate + 2 ADP + phosphate + 2 H(+). It carries out the reaction hydrogencarbonate + NH4(+) + 2 ATP = carbamoyl phosphate + 2 ADP + phosphate + 2 H(+). It participates in amino-acid biosynthesis; L-arginine biosynthesis; carbamoyl phosphate from bicarbonate: step 1/1. The protein operates within pyrimidine metabolism; UMP biosynthesis via de novo pathway; (S)-dihydroorotate from bicarbonate: step 1/3. In terms of biological role, large subunit of the glutamine-dependent carbamoyl phosphate synthetase (CPSase). CPSase catalyzes the formation of carbamoyl phosphate from the ammonia moiety of glutamine, carbonate, and phosphate donated by ATP, constituting the first step of 2 biosynthetic pathways, one leading to arginine and/or urea and the other to pyrimidine nucleotides. The large subunit (synthetase) binds the substrates ammonia (free or transferred from glutamine from the small subunit), hydrogencarbonate and ATP and carries out an ATP-coupled ligase reaction, activating hydrogencarbonate by forming carboxy phosphate which reacts with ammonia to form carbamoyl phosphate. In Thermotoga neapolitana (strain ATCC 49049 / DSM 4359 / NBRC 107923 / NS-E), this protein is Carbamoyl phosphate synthase large chain.